The chain runs to 906 residues: Nuclear factor NF-kappa-B p100 subunit (906 aa).

Residues 34–223 (AVGPYLVIIE…DPIHDSKSPG (190 aa)) form the RHD domain. A Nuclear localization signal motif is present at residues 336-340 (RNRKK). A GRR region spans residues 345 to 374 (FPQHFGGGSHMGGAGGAGGFGAGGGGNLSF). ANK repeat units lie at residues 472-501 (NGDT…SIPS), 511-540 (LQQT…NPTL), 544-573 (YGNS…SATP), 582-611 (QGLL…DVNG), 616-646 (GGRT…NVNS), and 650-679 (AGNT…DVQR). Disordered stretches follow at residues 677 to 734 (VQRE…GPRQ) and 857 to 906 (EPLE…QQVH). A compositionally biased stretch (low complexity) spans 684-695 (PVSPSSVRVPSS). A compositionally biased stretch (acidic residues) spans 697-708 (TDGDPEEQEQEQ). In terms of domain architecture, Death spans 771 to 857 (RNHLLSLDTD…GAVRMLRKPE (87 aa)).

In terms of assembly, component of the NF-kappa-B RelB-p52 complex. Post-translationally, while translation occurs, the particular unfolded structure after the GRR repeat promotes the generation of p52 making it an acceptable substrate for the proteasome. This process is known as cotranslational processing. The processed form is active and the unprocessed form acts as an inhibitor (I kappa B-like), being able to form cytosolic complexes with NF-kappa B, trapping it in the cytoplasm. Complete folding of the region downstream of the GRR repeat precludes processing. Constitutive processing is tightly suppressed by its C-terminal processing inhibitory domain, named PID, which contains the death domain.

The protein resides in the nucleus. It localises to the cytoplasm. Functionally, NF-kappa-B is a pleiotropic transcription factor present in almost all cell types and is the endpoint of a series of signal transduction events that are initiated by a vast array of stimuli related to many biological processes such as inflammation, immunity, differentiation, cell growth, tumorigenesis and apoptosis. NF-kappa-B is a homo- or heterodimeric complex formed by the Rel-like domain-containing proteins RELA/p65, RELB, NFKB1/p105, NFKB1/p50, REL and NFKB2/p52. The dimers bind at kappa-B sites in the DNA of their target genes and the individual dimers have distinct preferences for different kappa-B sites that they can bind with distinguishable affinity and specificity. Different dimer combinations act as transcriptional activators or repressors, respectively. NF-kappa-B is controlled by various mechanisms of post-translational modification and subcellular compartmentalization as well as by interactions with other cofactors or corepressors. NF-kappa-B complexes are held in the cytoplasm in an inactive state complexed with members of the NF-kappa-B inhibitor (I-kappa-B) family. In a conventional activation pathway, I-kappa-B is phosphorylated by I-kappa-B kinases (IKKs) in response to different activators, subsequently degraded thus liberating the active NF-kappa-B complex which translocates to the nucleus. In a non-canonical activation pathway, the MAP3K14-activated CHUK/IKKA homodimer phosphorylates NFKB2/p100 associated with RelB, inducing its proteolytic processing to NFKB2/p52 and the formation of NF-kappa-B RelB-p52 complexes. The NF-kappa-B heterodimeric RelB-p52 complex is a transcriptional activator. NFKB2 appears to have dual functions such as cytoplasmic retention of attached NF-kappa-B proteins by p100 and generation of p52 by a cotranslational processing. The proteasome-mediated process ensures the production of both p52 and p100 and preserves their independent function. p52 binds to the kappa-B consensus sequence 5'-GGRNNYYCC-3', located in the enhancer region of genes involved in immune response and acute phase reactions. In concert with RELB, may play a role in the regulation of the circadian clock. The sequence is that of Nuclear factor NF-kappa-B p100 subunit (NFKB2) from Gallus gallus (Chicken).